A 75-amino-acid polypeptide reads, in one-letter code: DNA-directed RNA polymerase subunit omega (75 aa).

It belongs to the RNA polymerase subunit omega family. As to quaternary structure, in cyanobacteria the RNAP catalytic core is composed of 2 alpha, 1 beta, 1 beta', 1 gamma and 1 omega subunit. When a sigma factor is associated with the core the holoenzyme is formed, which can initiate transcription.

The catalysed reaction is RNA(n) + a ribonucleoside 5'-triphosphate = RNA(n+1) + diphosphate. In terms of biological role, promotes RNA polymerase assembly. Latches the N- and C-terminal regions of the beta' subunit thereby facilitating its interaction with the beta and alpha subunits. The chain is DNA-directed RNA polymerase subunit omega from Prochlorococcus marinus (strain MIT 9211).